The sequence spans 172 residues: Small integral membrane protein 23 (172 aa).

The Cytoplasmic portion of the chain corresponds to M1–T36. Residues L37–G53 form a helical; Signal-anchor for type II membrane protein membrane-spanning segment. Residues S54–L172 lie on the Extracellular side of the membrane. The stretch at L96–L128 forms a coiled coil.

The protein resides in the cell membrane. This is Small integral membrane protein 23 (SMIM23) from Homo sapiens (Human).